A 1027-amino-acid polypeptide reads, in one-letter code: LLGL scribble cell polarity complex component 2 (1027 aa).

10 WD repeats span residues 36 to 69, 76 to 117, 132 to 169, 193 to 227, 233 to 268, 282 to 324, 332 to 366, 388 to 464, 508 to 583, and 592 to 653; these read SALGYSPSLRILAIGTRSGAVKLYGAPGVEFMGL, VLQI…EESF, VTEILPHSSGELLYLGTESGNVFVVQLPGFRTLHDRTI, ALQEHPRDPNQILIGYSRGLVVIWDLQGSRALSHF, LENASWQRDGCLIVTCHSDGSHCQWPVSSDTQNPEP, AITK…GQQT, VIDFTVLSEADPAAAFDDPYALVVLAEEELVVIDL, TCSH…YKLS, QKIF…FVLV, and TSLA…LRQS. Ser-653 bears the Phosphoserine mark. The segment covering 654-669 has biased composition (basic residues); it reads FRRMRRSRVSSHKRRP. A disordered region spans residues 654–678; that stretch reads FRRMRRSRVSSHKRRPGGPTGEAQA. 4 WD repeats span residues 715–771, 780–832, 837–890, and 904–927; these read VRTL…KEIQ, GILV…VSAK, LTAL…VRYS, and VFTKYGQGFYLISPSEFERFSLST. The tract at residues 940–981 is disordered; sequence TKAKKHNRPSNGNGTGLKMTSSGHVRNSKSQSDGDEKKPGPV. Over residues 957-970 the composition is skewed to polar residues; it reads KMTSSGHVRNSKSQ. Phosphoserine is present on residues Ser-971 and Ser-1022.

It belongs to the WD repeat L(2)GL family. In terms of assembly, interacts with GPSM2/LGN, PRKCI/aPKC and PARD6B/Par-6. The complex is enhanced during mitosis. Interacts with DCAF1. In terms of processing, phosphorylated at Ser-653 by PRKCI. Phosphorylation is enhanced during cell polarization induced by calcium. Phosphorylation may occur during the cell-cell contact-induced cell polarization and may contribute to the segregation of LLGL2 from the PRKCI/aPKC and PARD6B/Par-6 complex.

The protein localises to the cytoplasm. In terms of biological role, part of a complex with GPSM2/LGN, PRKCI/aPKC and PARD6B/Par-6, which may ensure the correct organization and orientation of bipolar spindles for normal cell division. This complex plays roles in the initial phase of the establishment of epithelial cell polarity. This Mus musculus (Mouse) protein is LLGL scribble cell polarity complex component 2 (Llgl2).